The primary structure comprises 412 residues: Argininosuccinate synthase (412 aa).

Residues 20–28 (AYSGGLDTS) and alanine 48 each bind ATP. L-citrulline is bound by residues tyrosine 100 and serine 105. Glycine 130 is a binding site for ATP. L-aspartate contacts are provided by threonine 132, asparagine 136, and aspartate 137. Asparagine 136 is a binding site for L-citrulline. L-citrulline-binding residues include arginine 140, serine 189, serine 198, glutamate 274, and tyrosine 286.

Belongs to the argininosuccinate synthase family. Type 1 subfamily. As to quaternary structure, homotetramer.

The protein localises to the cytoplasm. The enzyme catalyses L-citrulline + L-aspartate + ATP = 2-(N(omega)-L-arginino)succinate + AMP + diphosphate + H(+). The protein operates within amino-acid biosynthesis; L-arginine biosynthesis; L-arginine from L-ornithine and carbamoyl phosphate: step 2/3. The protein is Argininosuccinate synthase of Shewanella halifaxensis (strain HAW-EB4).